The following is a 793-amino-acid chain: Protocadherin beta-7 (793 aa).

The N-terminal stretch at M1–A26 is a signal peptide. Residues G27–L688 lie on the Extracellular side of the membrane. 5 Cadherin domains span residues V35 to F133, I138 to F242, Y247 to L347, L352 to F451, and Y456 to V561. Residue N169 is glycosylated (N-linked (GlcNAc...) asparagine). N-linked (GlcNAc...) asparagine glycans are attached at residues N418 and N436. N567 is a glycosylation site (N-linked (GlcNAc...) asparagine). The 104-residue stretch at S568–L671 folds into the Cadherin 6 domain. The helical transmembrane segment at V689–V709 threads the bilayer. Residues R710–F793 are Cytoplasmic-facing.

It is found in the cell membrane. Potential calcium-dependent cell-adhesion protein. May be involved in the establishment and maintenance of specific neuronal connections in the brain. This Pan troglodytes (Chimpanzee) protein is Protocadherin beta-7 (PCDHB7).